We begin with the raw amino-acid sequence, 102 residues long: MNGQNIRIRLKAFDHRVLDASTREIVSTAKRTGANVRGPIPLPTRIEKFTVNRSTHIDKKSREQFEMRTHKRLLDIVDPTPQTVDALMKLDLAAGVDVEIKL.

Belongs to the universal ribosomal protein uS10 family. In terms of assembly, part of the 30S ribosomal subunit.

Its function is as follows. Involved in the binding of tRNA to the ribosomes. The chain is Small ribosomal subunit protein uS10 from Chelativorans sp. (strain BNC1).